We begin with the raw amino-acid sequence, 286 residues long: Secretory carrier-associated membrane protein 2 (286 aa).

2 stretches are compositionally biased toward basic and acidic residues: residues 1–10 (MAGRYDRNPF) and 54–63 (STKDMKKKEK). Positions 1 to 63 (MAGRYDRNPF…STKDMKKKEK (63 aa)) are disordered. The Cytoplasmic segment spans residues 1–126 (MAGRYDRNPF…LQRMQYLAFS (126 aa)). Residues 52 to 89 (LDSTKDMKKKEKELQAKEAELNKRESELRRREEAASRA) are a coiled coil. 4 helical membrane passes run 127-147 (SLLG…AAWI), 152-172 (VMIW…AYVL), 189-209 (FGWF…SAVA), and 237-257 (IFYF…VVVI). The Cytoplasmic segment spans residues 258–286 (QQVYMYFRGSGKAAEMKREAARGAMRSAF).

It belongs to the SCAMP family.

The protein resides in the cell membrane. It localises to the cytoplasmic vesicle. It is found in the secretory vesicle membrane. In terms of biological role, probably involved in membrane trafficking. The chain is Secretory carrier-associated membrane protein 2 (SCAMP2) from Oryza sativa subsp. japonica (Rice).